The following is an 89-amino-acid chain: Small ribosomal subunit protein uS15 (89 aa).

This sequence belongs to the universal ribosomal protein uS15 family. Part of the 30S ribosomal subunit. Forms a bridge to the 50S subunit in the 70S ribosome, contacting the 23S rRNA.

In terms of biological role, one of the primary rRNA binding proteins, it binds directly to 16S rRNA where it helps nucleate assembly of the platform of the 30S subunit by binding and bridging several RNA helices of the 16S rRNA. Forms an intersubunit bridge (bridge B4) with the 23S rRNA of the 50S subunit in the ribosome. In Mycobacteroides abscessus (strain ATCC 19977 / DSM 44196 / CCUG 20993 / CIP 104536 / JCM 13569 / NCTC 13031 / TMC 1543 / L948) (Mycobacterium abscessus), this protein is Small ribosomal subunit protein uS15.